The chain runs to 100 residues: Large ribosomal subunit protein uL23 (100 aa).

It belongs to the universal ribosomal protein uL23 family. In terms of assembly, part of the 50S ribosomal subunit. Contacts protein L29, and trigger factor when it is bound to the ribosome.

Functionally, one of the early assembly proteins it binds 23S rRNA. One of the proteins that surrounds the polypeptide exit tunnel on the outside of the ribosome. Forms the main docking site for trigger factor binding to the ribosome. This chain is Large ribosomal subunit protein uL23, found in Mycobacterium sp. (strain JLS).